Consider the following 203-residue polypeptide: Holliday junction branch migration complex subunit RuvA (203 aa).

The interval methionine 1–leucine 63 is domain I. Residues asparagine 64–lysine 142 are domain II. Residues glutamate 143–histidine 149 form a flexible linker region. A domain III region spans residues isoleucine 150–phenylalanine 203.

This sequence belongs to the RuvA family. As to quaternary structure, homotetramer. Forms an RuvA(8)-RuvB(12)-Holliday junction (HJ) complex. HJ DNA is sandwiched between 2 RuvA tetramers; dsDNA enters through RuvA and exits via RuvB. An RuvB hexamer assembles on each DNA strand where it exits the tetramer. Each RuvB hexamer is contacted by two RuvA subunits (via domain III) on 2 adjacent RuvB subunits; this complex drives branch migration. In the full resolvosome a probable DNA-RuvA(4)-RuvB(12)-RuvC(2) complex forms which resolves the HJ.

It is found in the cytoplasm. The RuvA-RuvB-RuvC complex processes Holliday junction (HJ) DNA during genetic recombination and DNA repair, while the RuvA-RuvB complex plays an important role in the rescue of blocked DNA replication forks via replication fork reversal (RFR). RuvA specifically binds to HJ cruciform DNA, conferring on it an open structure. The RuvB hexamer acts as an ATP-dependent pump, pulling dsDNA into and through the RuvAB complex. HJ branch migration allows RuvC to scan DNA until it finds its consensus sequence, where it cleaves and resolves the cruciform DNA. This Rickettsia africae (strain ESF-5) protein is Holliday junction branch migration complex subunit RuvA.